Consider the following 530-residue polypeptide: Cytochrome P450 78A6 (530 aa).

The chain crosses the membrane as a helical span at residues 25–45 (LAFSLLAVTIIWLAISLFLWT). Cys474 is a heme binding site.

Belongs to the cytochrome P450 family. Heme serves as cofactor. In terms of tissue distribution, expressed in leaves, sepals, petals, stamens, carpels and developing ovules.

The protein localises to the membrane. Functionally, plays a role in seed and fruit development. Functions probably in association with CYP78A9 in the regulation of seed growth. Acts maternally to promote seed growth. This chain is Cytochrome P450 78A6 (CYP78A6), found in Arabidopsis thaliana (Mouse-ear cress).